Reading from the N-terminus, the 236-residue chain is Ribonuclease P protein component 3 (236 aa).

This sequence belongs to the eukaryotic/archaeal RNase P protein component 3 family. As to quaternary structure, consists of a catalytic RNA component and at least 4-5 protein subunits.

It localises to the cytoplasm. The catalysed reaction is Endonucleolytic cleavage of RNA, removing 5'-extranucleotides from tRNA precursor.. In terms of biological role, part of ribonuclease P, a protein complex that generates mature tRNA molecules by cleaving their 5'-ends. The chain is Ribonuclease P protein component 3 from Natronomonas pharaonis (strain ATCC 35678 / DSM 2160 / CIP 103997 / JCM 8858 / NBRC 14720 / NCIMB 2260 / Gabara) (Halobacterium pharaonis).